A 383-amino-acid chain; its full sequence is Galactokinase (383 aa).

Position 34-37 (34-37 (EHTD)) interacts with substrate. 124–130 (GAGLSSS) contacts ATP. Residues serine 130 and glutamate 162 each coordinate Mg(2+). The active-site Proton acceptor is the aspartate 174. Tyrosine 223 serves as a coordination point for substrate.

This sequence belongs to the GHMP kinase family. GalK subfamily.

The protein resides in the cytoplasm. The catalysed reaction is alpha-D-galactose + ATP = alpha-D-galactose 1-phosphate + ADP + H(+). It participates in carbohydrate metabolism; galactose metabolism. Its function is as follows. Catalyzes the transfer of the gamma-phosphate of ATP to D-galactose to form alpha-D-galactose-1-phosphate (Gal-1-P). In Yersinia pseudotuberculosis serotype IB (strain PB1/+), this protein is Galactokinase.